A 213-amino-acid chain; its full sequence is Validoxylamine A 7'-phosphate phosphatase (213 aa).

D8 acts as the Nucleophile in catalysis. D8 and D10 together coordinate a divalent metal cation. Substrate contacts are provided by residues 8–10 (DLD), 107–108 (TS), and K140. Catalysis depends on D10, which acts as the Proton donor. D165 contacts a divalent metal cation.

The protein belongs to the HAD-like hydrolase superfamily. CbbY/CbbZ/Gph/YieH family. It depends on Mg(2+) as a cofactor. Requires Mn(2+) as cofactor. The cofactor is Co(2+).

It catalyses the reaction validoxylamine A 7'-phosphate + H2O = validoxylamine A + phosphate. Functionally, involved in the biosynthesis of the antifungal agent validamycin A. Catalyzes the dephosphorylation of validoxylamine A 7'-phosphate to yield validoxylamine A. VldH is also able to convert trehalose 6-phosphate to trehalose. This is Validoxylamine A 7'-phosphate phosphatase from Streptomyces hygroscopicus subsp. limoneus.